The primary structure comprises 568 residues: MSVVVTRYRGGGPQYMNASSTSPKPVVGEPSIRTHALHALAYCERLFYLEEVEELRVADAAVFAGRRLHVQLQEEGEHVELELASEALGLHGRVDAVKTREGTLVVYEHKRGRHAPGGDAPEAWPSDRLQAGAYALLVEERFPGAPVECRVRYHQTDTTVRFPLDAALRGAVVAAVARARLLRASRERPPVTQEERKCAKCSLAPVCLPEEERQVVGEERPRLFPEDDVRQVLHVATPGTRVGRAAEELVVTPPEGEGAPSRQPGRMVSALIAHGAVQVSAQALAYCVENDIGVHWFTSGGRYLGGLGGGAGNVHRRLRQFEALRQASVCLGLARRLVAAKLEGQLRFLLRASRGDSESRQVLASAVRDLRALLPKCEEAPSLEVLLGLEGAGAARYFGALPYLQGEDVDTRLRFEGRNRRPPRDRFNAVLGFLFGLVHREVEAAIRAVGLDVAFGFYHQPRGTAGPLGLDVMELFRVPLADMPLVASVNRRAWDADADFEVTSEHVWLSKAGRAKAIELYERRKRETWKNNVLGYSLSYARLVELEVRLLEKEWTGKPGLFATFRLR.

Positions Met1–Pro209 are CRISPR-associated exonuclease Cas4. Cys43 lines the [4Fe-4S] cluster pocket. Residues Asp95 and Glu108 each coordinate Mn(2+). [4Fe-4S] cluster contacts are provided by Cys198, Cys201, and Cys207. A CRISPR-associated endonuclease Cas1 region spans residues Val232–Arg568. Residues Glu390, His459, and Glu474 each coordinate Mn(2+).

In the N-terminal section; belongs to the CRISPR-associated exonuclease Cas4 family. The protein in the C-terminal section; belongs to the CRISPR-associated endonuclease Cas1 family. Homodimer, forms a heterotetramer with a Cas2 homodimer. [4Fe-4S] cluster serves as cofactor. It depends on Mg(2+) as a cofactor. Mn(2+) is required as a cofactor.

The catalysed reaction is exonucleolytic cleavage in the 5'- to 3'-direction to yield nucleoside 3'-phosphates.. Its function is as follows. CRISPR (clustered regularly interspaced short palindromic repeat), is an adaptive immune system that provides protection against mobile genetic elements (viruses, transposable elements and conjugative plasmids). CRISPR clusters contain spacers, sequences complementary to antecedent mobile elements, and target invading nucleic acids. CRISPR clusters are transcribed and processed into CRISPR RNA (crRNA). The Cas4 region acts as a ssDNA exonuclease, while the Cas1 region acts as a dsDNA endonuclease. Involved in the integration of spacer DNA into the CRISPR cassette. The chain is CRISPR-associated exonuclease Cas4/endonuclease Cas1 fusion (cas4-cas1) from Myxococcus xanthus (strain DK1622).